Reading from the N-terminus, the 431-residue chain is uncharacterized protein (431 aa).

Disordered stretches follow at residues 17–66 (VDPE…GQQA) and 81–415 (GSVT…ALPR). Positions 91–106 (DKADREPAARPRDPRS) are enriched in basic and acidic residues. A compositionally biased stretch (basic residues) spans 173 to 195 (TYRRRRPTAATPSRKKKARRGPK). The segment covering 235–244 (RTPGPVHSAA) has biased composition (low complexity). Residues 299 to 312 (RMGGSSGGRGGTPG) show a composition bias toward gly residues. Residues 317–342 (RAAPGARPTAPDGAPGRWDGPADGPA) are compositionally biased toward low complexity. A compositionally biased stretch (gly residues) spans 343–360 (PGLGRGGWGVGREAGGSG).

This is an uncharacterized protein from Homo sapiens (Human).